The chain runs to 45 residues: Large ribosomal subunit protein bL34 (45 aa).

Residues 1–10 (MTKRTLEGTN) are compositionally biased toward basic and acidic residues. Residues 1-27 (MTKRTLEGTNRKRKRTSGFRARMRSAT) are disordered. Residues 11–23 (RKRKRTSGFRARM) show a composition bias toward basic residues.

It belongs to the bacterial ribosomal protein bL34 family.

This is Large ribosomal subunit protein bL34 from Synechococcus elongatus (strain ATCC 33912 / PCC 7942 / FACHB-805) (Anacystis nidulans R2).